The chain runs to 294 residues: MTVDVKKVINHKIKPIEYNLTRKDVALYAISLGCGKKHLKFVYEGSDNFSALPTLGVIFPGQMIVDVISEGIDGIEFDPMMLLHGEQELEILNEIPVEGVFVTESKITNLYDKGKGALLILQCITSEKSSGKPIFKNIFSFFIRGIGGFGGDRGPNEKPIQIPKDRAPDAISKQATSEDQAVIYRLAGGDLNPLHIDPEMSKIGGFEVPILHGLCTYGIASRGVLEHFCDNDPSRLKSIKTRFTKHVYPGETIETEMWKINPTTILFQSKTNRDGSYVLSSGVAIIEPIKKGSL.

(3R)-3-hydroxydecanoyl-CoA is bound by residues 84 to 85, Lys-113, 190 to 195, Gly-213, and Phe-243; these read HG and DLNPLH. The region spanning 165 to 269 is the MaoC-like domain; sequence DRAPDAISKQ…INPTTILFQS (105 aa). The Microbody targeting signal signature appears at 292–294; that stretch reads GSL.

It belongs to the short-chain dehydrogenases/reductases (SDR) family.

It is found in the peroxisome. It catalyses the reaction a (3R)-3-hydroxyacyl-CoA = a (2E)-enoyl-CoA + H2O. This Dictyostelium discoideum (Social amoeba) protein is Probable enoyl-CoA hydratase 2 (mfeB).